A 401-amino-acid chain; its full sequence is NADH-quinone oxidoreductase subunit D (401 aa).

It belongs to the complex I 49 kDa subunit family. In terms of assembly, NDH-1 is composed of 14 different subunits. Subunits NuoB, C, D, E, F, and G constitute the peripheral sector of the complex.

The protein localises to the cell inner membrane. It carries out the reaction a quinone + NADH + 5 H(+)(in) = a quinol + NAD(+) + 4 H(+)(out). Its function is as follows. NDH-1 shuttles electrons from NADH, via FMN and iron-sulfur (Fe-S) centers, to quinones in the respiratory chain. The immediate electron acceptor for the enzyme in this species is believed to be ubiquinone. Couples the redox reaction to proton translocation (for every two electrons transferred, four hydrogen ions are translocated across the cytoplasmic membrane), and thus conserves the redox energy in a proton gradient. The sequence is that of NADH-quinone oxidoreductase subunit D from Rhodopseudomonas palustris (strain HaA2).